We begin with the raw amino-acid sequence, 319 residues long: 12-(S)-hydroxy-5,8,10,14-eicosatetraenoic acid receptor (319 aa).

Topologically, residues 1 to 16 (MERTNCSAASTVVETA) are extracellular. An N-linked (GlcNAc...) asparagine glycan is attached at N5. A helical transmembrane segment spans residues 17-37 (VGTMLTLECVLGLMGNAVALW). Residues 38–52 (TFFYRLKVWKPYAVY) lie on the Cytoplasmic side of the membrane. Residues 53–73 (LFNLVVADLLLATSLPFFAAF) form a helical membrane-spanning segment. The Extracellular segment spans residues 74–91 (YLKGKTWKLGHMPCQVLL). A helical membrane pass occupies residues 92 to 110 (FLLAFSRGVGVAFLTTVAL). Over 111–131 (DRYLRVVHPRLRVNLLSLRAA) the chain is Cytoplasmic. A helical membrane pass occupies residues 132–152 (WGISSLIWLLMVVLTPQNLLT). The Extracellular segment spans residues 153–180 (CRTTQNSTECPSFYPTGGAKAIATCQEV). The helical transmembrane segment at 181–201 (LFFLQVLLPFGLISFCNSGLI) threads the bilayer. At 202 to 219 (RTLQKRLRESDKQPRIRR) the chain is on the cytoplasmic side. Residues 220–240 (ARVLVAIVLLLFGLCFLPSVL) form a helical membrane-spanning segment. Residues 241-265 (TRVLVHIFQEFKSCSVQQAIVRASD) lie on the Extracellular side of the membrane. The chain crosses the membrane as a helical span at residues 266 to 284 (IAGSLTCLHSTLSPAIYCF). Residues 285–319 (SNPAFTHSYRKVLKSLRGRRKAAESPSDNLRDSYS) are Cytoplasmic-facing.

Belongs to the G-protein coupled receptor 1 family. In terms of assembly, interacts with KRAS; in a farnesylation-dependent manner.

It localises to the cell membrane. Functionally, high-affinity receptor for 12-(S)-hydroxy-5,8,10,14-eicosatetraenoic acid (12-S-HETE), with much lower affinities for other HETE isomers. 12-S-HETE is a eicosanoid, a 12-lipoxygenase (ALOX12) metabolite of arachidonic acid, involved in many physiologic and pathologic processes, such as cell growth, adhesion, inflammation and cancer promotion. 12-S-HETE-binding leads to activation of ERK1/2 (MAPK3/MAPK1), MEK, and NF-kappa-B pathways and leads to cell growth. Plays a crucial role for proliferation, survival and macropinocytosis of KRAS-dependent cancer cells by mediating the translocation of KRAS from the endoplasmic reticulum to the plasma membrane (PM) and its association with the PM. Contributes to enhanced immune responses by inducing dendrite protrusion of small intestinal CX3CR1(+) phagocytes for the uptake of luminal antigens. Also acts as a key receptor for 12-(S)-HETE-mediated liver ischemia reperfusion injury. Proton-sensing G protein-coupled receptor. In Mus musculus (Mouse), this protein is 12-(S)-hydroxy-5,8,10,14-eicosatetraenoic acid receptor (Gpr31).